The following is a 377-amino-acid chain: tRNA-specific 2-thiouridylase MnmA (377 aa).

ATP is bound by residues 8-15 (GMSGGVDS) and Met-34. Residues 94–96 (NPD) form an interaction with target base in tRNA region. Cys-99 acts as the Nucleophile in catalysis. Residues Cys-99 and Cys-201 are joined by a disulfide bond. Residue Gly-123 participates in ATP binding. Residues 151 to 153 (KDQ) form an interaction with tRNA region. The active-site Cysteine persulfide intermediate is Cys-201. The tract at residues 315–316 (RY) is interaction with tRNA.

It belongs to the MnmA/TRMU family.

It localises to the cytoplasm. The catalysed reaction is S-sulfanyl-L-cysteinyl-[protein] + uridine(34) in tRNA + AH2 + ATP = 2-thiouridine(34) in tRNA + L-cysteinyl-[protein] + A + AMP + diphosphate + H(+). Catalyzes the 2-thiolation of uridine at the wobble position (U34) of tRNA, leading to the formation of s(2)U34. The sequence is that of tRNA-specific 2-thiouridylase MnmA from Acinetobacter baylyi (strain ATCC 33305 / BD413 / ADP1).